We begin with the raw amino-acid sequence, 156 residues long: Arginine repressor (156 aa).

Belongs to the ArgR family.

The protein localises to the cytoplasm. It participates in amino-acid biosynthesis; L-arginine biosynthesis [regulation]. Functionally, regulates arginine biosynthesis genes. The polypeptide is Arginine repressor (Sodalis glossinidius (strain morsitans)).